The following is a 109-amino-acid chain: Small ribosomal subunit protein bS6 (109 aa).

The protein belongs to the bacterial ribosomal protein bS6 family.

Functionally, binds together with bS18 to 16S ribosomal RNA. The protein is Small ribosomal subunit protein bS6 of Ehrlichia chaffeensis (strain ATCC CRL-10679 / Arkansas).